A 542-amino-acid polypeptide reads, in one-letter code: MEARRSGNFKASIWDDDFLQSLTSPYTAKEYLKQADKLKWQVKVIIKETKQRLDQLDLIDNIQRLGISHHFRDEIQRVLQNIYEKMRVECPDRMLMEKDLYSTSLQFRLLRQHGYHVSQDVFCSFMDGAGNFQAVDDLKGILALYEASFLSREGENILGSARDFSTRHLKQKLEEITDPILAEKIRRALELPLHWRLQKLEAIWFINIYESRFDANLILLQLAKLEFNMVQAQYQEDLKWLSRWYKETGLPEKMNFARDRLAECFLWALGFIPEAHLGQARKILTKIAVLIVIMDDFYDIYGTLDEIKVFTEELQRWDINALDNLPEYMRICFLAIFNTANEIAYDILRDQGINIISNLRRLWAELGRVYYTEAKWYHSGYFPSTEEYLNVAWISITGPVLLFHAYFSIMNPIDMKELQYLEQYPGIIRWPSTVLRLADDLGTASDEIKRGDVPKSIQCYMHETGCSEEEAREYVKQLIDTTLKKMNKEILMEKPTNDFGATAMNLARISLFFYQYGDGFGVPHNQTKENLVSLIVKPICLT.

5 residues coordinate Mg(2+): aspartate 295, aspartate 299, aspartate 439, threonine 443, and glutamate 447. The DDXXD motif motif lies at 295–299; the sequence is DDFYD.

The protein belongs to the terpene synthase family. Requires Mg(2+) as cofactor.

The catalysed reaction is (2E,6E)-farnesyl diphosphate = (1S,5S,6R)-alpha-bergamotene + diphosphate. It participates in secondary metabolite biosynthesis; terpenoid biosynthesis. Its function is as follows. Sesquiterpene synthase converting farnesyl diphosphate to trans-alpha-bergamotene as the major product. This Phyla dulcis (Aztec sweet herb) protein is Trans-alpha-bergamotene synthase.